A 264-amino-acid polypeptide reads, in one-letter code: 3-methyl-2-oxobutanoate hydroxymethyltransferase (264 aa).

Asp42 and Asp81 together coordinate Mg(2+). 3-methyl-2-oxobutanoate contacts are provided by residues 42-43 (DS), Asp81, and Lys110. Residue Glu112 coordinates Mg(2+). Residue Glu179 is the Proton acceptor of the active site.

The protein belongs to the PanB family. Homodecamer; pentamer of dimers. Mg(2+) is required as a cofactor.

The protein resides in the cytoplasm. The enzyme catalyses 3-methyl-2-oxobutanoate + (6R)-5,10-methylene-5,6,7,8-tetrahydrofolate + H2O = 2-dehydropantoate + (6S)-5,6,7,8-tetrahydrofolate. It functions in the pathway cofactor biosynthesis; (R)-pantothenate biosynthesis; (R)-pantoate from 3-methyl-2-oxobutanoate: step 1/2. Its function is as follows. Catalyzes the reversible reaction in which hydroxymethyl group from 5,10-methylenetetrahydrofolate is transferred onto alpha-ketoisovalerate to form ketopantoate. The sequence is that of 3-methyl-2-oxobutanoate hydroxymethyltransferase from Francisella tularensis subsp. tularensis (strain FSC 198).